Reading from the N-terminus, the 265-residue chain is Protein HesA, vegetative (265 aa).

Belongs to the HesA/MoeB/ThiF family.

This Trichormus variabilis (strain ATCC 29413 / PCC 7937) (Anabaena variabilis) protein is Protein HesA, vegetative (hesA2).